The chain runs to 620 residues: UvrABC system protein C (620 aa).

The GIY-YIG domain occupies 13-92; sequence DKPGVYIMKN…IKKYSPRYNI (80 aa). The UVR domain maps to 204–239; it reads TSIIKNLKLEMEKAAEELEFEKAAKIRDRILAIELI.

It belongs to the UvrC family. Interacts with UvrB in an incision complex.

Its subcellular location is the cytoplasm. Its function is as follows. The UvrABC repair system catalyzes the recognition and processing of DNA lesions. UvrC both incises the 5' and 3' sides of the lesion. The N-terminal half is responsible for the 3' incision and the C-terminal half is responsible for the 5' incision. The sequence is that of UvrABC system protein C from Clostridium perfringens (strain SM101 / Type A).